The chain runs to 276 residues: Secreted RxLR effector protein 150 (276 aa).

Residues 1-18 (MRNIAFLIGLFFIGYSSC) form the signal peptide. The short motif at 49-64 (RTLQADDRERILAEER) is the RxLR-dEER element.

The protein belongs to the RxLR effector family.

The protein resides in the secreted. It localises to the host nucleus. The protein localises to the host cytoplasm. Secreted effector that partially suppresses the host cell death induced by cell death-inducing proteins. This Plasmopara viticola (Downy mildew of grapevine) protein is Secreted RxLR effector protein 150.